A 253-amino-acid polypeptide reads, in one-letter code: Sulfate transporter CysZ (253 aa).

Transmembrane regions (helical) follow at residues 31–51, 75–95, 151–171, and 222–242; these read FVILPLLVNILLMGGAFWWLF, LLWPLAVISVLLVFGYFFSTI, IVLLILYFIPGIGQTVAPVLW, and IPLLNLFIMPVAVCGATAMWV.

This sequence belongs to the CysZ family.

It localises to the cell inner membrane. In terms of biological role, high affinity, high specificity proton-dependent sulfate transporter, which mediates sulfate uptake. Provides the sulfur source for the cysteine synthesis pathway. The protein is Sulfate transporter CysZ of Escherichia coli O81 (strain ED1a).